The sequence spans 461 residues: Coagulation factor IX (461 aa).

An N-terminal signal peptide occupies residues 1-28 (MQRVNMIMAESPGLITICLLGYLLSAEC). Residues 29–46 (TVFLDHENANKILNRPKR) constitute a propeptide that is removed on maturation. The Ca(2+) site is built by Y47, N48, E53, E54, E61, E63, E66, E67, E72, E73, and E76. A Gla domain is found at 47–92 (YNSGKLEEFVQGNLERECMEEKCSFEEAREVFENTERTTEFWKQYV). 11 positions are modified to 4-carboxyglutamate: E53, E54, E61, E63, E66, E67, E72, E73, E76, E79, and E82. E61 serves as a coordination point for Mg(2+). The cysteines at positions 64 and 69 are disulfide-linked. Position 66 (E66) interacts with Mg(2+). E72 is a binding site for Mg(2+). Residue E76 participates in Mg(2+) binding. Residue E82 participates in Ca(2+) binding. E82 contacts Mg(2+). Residue T85 is glycosylated (O-linked (GalNAc...) threonine). Residues E86, D93, G94, and Q96 each contribute to the Ca(2+) site. At E86 the chain carries 4-carboxyglutamate. E86 contributes to the Mg(2+) binding site. The region spanning 93–129 (DGDQCESNPCLNGGSCKDDINSYECWCPFGFEGKNCE) is the EGF-like 1; calcium-binding domain. Disulfide bonds link C97–C108, C102–C117, C119–C128, C134–C145, C141–C155, C157–C170, C178–C335, C252–C268, C382–C396, and C407–C435. A glycan (O-linked (Glc...) serine) is linked at S99. S107 carries O-linked (Fuc...) serine glycosylation. D110 and D111 together coordinate Ca(2+). The residue at position 110 (D110) is a (3R)-3-hydroxyaspartate. S114 is subject to Phosphoserine. The EGF-like 2 domain occupies 130-171 (LDVTCNIKNGRCEQFCKNSADNKVVCSCTEGYRLAENQKSCE). Positions 192–226 (AETVFPDVDYVNSTEAETILDNITQSTQSFNDFTR) are cleaved as a propeptide — activation peptide. Y201 carries the post-translational modification Sulfotyrosine. S204 is subject to Phosphoserine. T205 bears the Phosphothreonine; alternate mark. A glycan (O-linked (GalNAc...) threonine; alternate) is linked at T205. A glycan (N-linked (GlcNAc...) asparagine) is linked at N213. 2 O-linked (GalNAc...) threonine glycosylation sites follow: T215 and T225. In terms of domain architecture, Peptidase S1 spans 227–459 (VVGGEDAKPG…YVNWIKEKTK (233 aa)). The active-site Charge relay system is H267. Ca(2+) is bound by residues E281, N283, E286, E288, and E291. The active-site Charge relay system is D315. S411 (charge relay system) is an active-site residue.

It belongs to the peptidase S1 family. As to quaternary structure, heterodimer of a light chain and a heavy chain; disulfide-linked. Interacts (inactive and activated) with F11 (activated) in calcium-dependent manner. Interacts with SERPINC1. Activated by factor XIa, which excises the activation peptide. The propeptide can also be removed by snake venom protease. Post-translationally, the iron and 2-oxoglutarate dependent 3-hydroxylation of aspartate and asparagine is (R) stereospecific within EGF domains. Activated by coagulation factor VIIa-tissue factor (F7-F3) complex in calcium-dependent manner. In terms of processing, predominantly O-glucosylated at Ser-99 by POGLUT1 in vitro.

It localises to the secreted. It carries out the reaction Selective cleavage of Arg-|-Ile bond in factor X to form factor Xa.. Its function is as follows. Factor IX is a vitamin K-dependent plasma protein that participates in the intrinsic pathway of blood coagulation by converting factor X to its active form in the presence of Ca(2+) ions, phospholipids, and factor VIIIa. This chain is Coagulation factor IX (F9), found in Pan troglodytes (Chimpanzee).